A 393-amino-acid chain; its full sequence is Chalcone synthase DIII (393 aa).

Residue Cys164 is part of the active site.

The protein belongs to the thiolase-like superfamily. Chalcone/stilbene synthases family.

The enzyme catalyses (E)-4-coumaroyl-CoA + 3 malonyl-CoA + 3 H(+) = 2',4,4',6'-tetrahydroxychalcone + 3 CO2 + 4 CoA. It functions in the pathway secondary metabolite biosynthesis; flavonoid biosynthesis. Its function is as follows. The primary product of this enzyme is 4,2',4',6'-tetrahydroxychalcone (also termed naringenin-chalcone or chalcone) which can under specific conditions spontaneously isomerize into naringenin. The protein is Chalcone synthase DIII (CHS-DIII) of Ipomoea batatas (Sweet potato).